Consider the following 275-residue polypeptide: Tropinone reductase-like 2 (275 aa).

NAD(+) is bound at residue 17–41; that stretch reads IITGGASGIGACTAELFHENGAKVV. Ser-150 serves as a coordination point for substrate. The Proton acceptor role is filled by Tyr-163.

This sequence belongs to the short-chain dehydrogenases/reductases (SDR) family.

Its function is as follows. Has no tropinone reductase activity. This Erythroxylum coca (Coca plant) protein is Tropinone reductase-like 2.